The sequence spans 226 residues: Exosome complex component Rrp4 (226 aa).

One can recognise an S1 motif domain in the interval 61–135 (NDLVIGKVNS…RDPLVSISDR (75 aa)). The 60-residue stretch at 141-200 (DSGVLMEISPSKVPRLIGKKGSMIQMIEEATDAAVTIGQNGWVVVSCESPEGLLKAKKAI) folds into the KH domain.

This sequence belongs to the RRP4 family. Component of the archaeal exosome complex. Forms a trimer of Rrp4 and/or Csl4 subunits. The trimer associates with a hexameric ring-like arrangement composed of 3 Rrp41-Rrp42 heterodimers.

It localises to the cytoplasm. Its function is as follows. Non-catalytic component of the exosome, which is a complex involved in RNA degradation. Increases the RNA binding and the efficiency of RNA degradation. Confers strong poly(A) specificity to the exosome. The chain is Exosome complex component Rrp4 from Nitrosopumilus maritimus (strain SCM1).